The chain runs to 207 residues: Uracil phosphoribosyltransferase (207 aa).

5-phospho-alpha-D-ribose 1-diphosphate contacts are provided by residues R77, R102, and 129–137 (DPMLATGGS). Uracil is bound by residues I192 and 197–199 (GDA). A 5-phospho-alpha-D-ribose 1-diphosphate-binding site is contributed by D198.

This sequence belongs to the UPRTase family. Mg(2+) is required as a cofactor.

It carries out the reaction UMP + diphosphate = 5-phospho-alpha-D-ribose 1-diphosphate + uracil. It functions in the pathway pyrimidine metabolism; UMP biosynthesis via salvage pathway; UMP from uracil: step 1/1. Its activity is regulated as follows. Allosterically activated by GTP. Functionally, catalyzes the conversion of uracil and 5-phospho-alpha-D-ribose 1-diphosphate (PRPP) to UMP and diphosphate. The sequence is that of Uracil phosphoribosyltransferase from Mycoplasma capricolum subsp. capricolum (strain California kid / ATCC 27343 / NCTC 10154).